Here is a 473-residue protein sequence, read N- to C-terminus: Ribulose bisphosphate carboxylase large chain (473 aa).

The segment at 1-136 is necessary and sufficient to target proteins to carboxysomes, interacts with shell proteins; it reads MAVKKYSAGV…RLEDVRFPLA (136 aa). N116 and T166 together coordinate substrate. K168 serves as the catalytic Proton acceptor. K170 contacts substrate. Mg(2+) contacts are provided by K194, D196, and E197. K194 is subject to N6-carboxylysine. H287 (proton acceptor) is an active-site residue. R288, H320, and S372 together coordinate substrate.

The protein belongs to the RuBisCO large chain family. Type I subfamily. As to quaternary structure, heterohexadecamer of 8 large chains and 8 small chains. Forms a CsoS2-CsoS1-RuBisCO complex. The N-terminus (residues 1-136) interacts with shell proteins CsoS1A, CsoS1B and CsoS1C. Holo-RuBisCO interacts with the N-terminal repeats of CsoS2; binding is sensitive to ionic strength. A fusion of a single N-terminal repeat to the C-terminus of the large subunit of RuBisCO (cbbL) shows the repeat can lie between a CbbL dimer, making minor contacts to CbbS; thus each RuBisCO holoenzyme could bind 8 repeats. It depends on Mg(2+) as a cofactor.

Its subcellular location is the carboxysome. The catalysed reaction is 2 (2R)-3-phosphoglycerate + 2 H(+) = D-ribulose 1,5-bisphosphate + CO2 + H2O. It carries out the reaction D-ribulose 1,5-bisphosphate + O2 = 2-phosphoglycolate + (2R)-3-phosphoglycerate + 2 H(+). RuBisCO catalyzes two reactions: the carboxylation of D-ribulose 1,5-bisphosphate, the primary event in carbon dioxide fixation, as well as the oxidative fragmentation of the pentose substrate. Both reactions occur simultaneously and in competition at the same active site. There are estimated to be 270 RuBisCO heterohexadecamers per carboxysome. Functionally, alpha-carboxysomes are able to assemble in the absence of RuBisCO, unlike beta-carboxysomes. The RuBisCO large subunit is required for enzyme integration into carboxysomes; replacing it with the carboxysomally targeted gene (Tcr_0838, AC Q31HD9) of H.crungenus places RuBisCO in the carboxysome, while the non-carboxysomal large subunit of H.crungenus (Tcr_0427, AC Q31IK0) is not incorporated in the carboxysome. The protein is Ribulose bisphosphate carboxylase large chain of Halothiobacillus neapolitanus (strain ATCC 23641 / c2) (Thiobacillus neapolitanus).